The following is a 189-amino-acid chain: RPW8-like protein 1 (189 aa).

The region spanning 1–153 is the RPW8 domain; it reads MPLVELLTSA…ITRQPMDIIE (153 aa). A helical membrane pass occupies residues 7 to 24; sequence LTSAALGLSLQLLHDAII. Coiled-coil stretches lie at residues 65 to 92 and 126 to 147; these read FRKV…LKLR and DIKK…ITRQ. Asparagine 177 is a glycosylation site (N-linked (GlcNAc...) asparagine).

This sequence belongs to the plant RPW8 protein family.

It is found in the membrane. Its function is as follows. Probable disease resistance (R) protein. This is RPW8-like protein 1 from Arabidopsis thaliana (Mouse-ear cress).